The following is a 341-amino-acid chain: DNA-directed RNA polymerase subunit alpha (341 aa).

The tract at residues 1-233 is alpha N-terminal domain (alpha-NTD); that stretch reads MVREEVPVST…DLFIPFLHAE (233 aa). The segment at 266–341 is alpha C-terminal domain (alpha-CTD); it reads IILKRIFIDQ…LKNSNQFESR (76 aa).

The protein belongs to the RNA polymerase alpha chain family. As to quaternary structure, in plastids the minimal PEP RNA polymerase catalytic core is composed of four subunits: alpha, beta, beta', and beta''. When a (nuclear-encoded) sigma factor is associated with the core the holoenzyme is formed, which can initiate transcription.

The protein resides in the plastid. The protein localises to the chloroplast. It carries out the reaction RNA(n) + a ribonucleoside 5'-triphosphate = RNA(n+1) + diphosphate. Its function is as follows. DNA-dependent RNA polymerase catalyzes the transcription of DNA into RNA using the four ribonucleoside triphosphates as substrates. The chain is DNA-directed RNA polymerase subunit alpha from Nymphaea alba (White water-lily).